Reading from the N-terminus, the 403-residue chain is GDSL esterase/lipase At1g28590 (403 aa).

Positions 1–27 are cleaved as a signal peptide; sequence MASLDSLPAMKLVRFILSTLLVTSVNS. The active-site Nucleophile is S43. N-linked (GlcNAc...) asparagine glycosylation is found at N139 and N323. Residues D346 and H349 contribute to the active site.

The protein belongs to the 'GDSL' lipolytic enzyme family.

The protein resides in the secreted. The protein is GDSL esterase/lipase At1g28590 of Arabidopsis thaliana (Mouse-ear cress).